Consider the following 289-residue polypeptide: Phosphate import ATP-binding protein PstB (289 aa).

Residues 1 to 37 form a disordered region; the sequence is MRSIDRPGGQAARPTIGSVAGASNTRTRDARSLPDTP. The ABC transporter domain occupies 41–284; sequence AAAENFSFYY…PVRRETEDYI (244 aa). Residue 73–80 coordinates ATP; the sequence is GPSGCGKS.

Belongs to the ABC transporter superfamily. Phosphate importer (TC 3.A.1.7) family. The complex is composed of two ATP-binding proteins (PstB), two transmembrane proteins (PstC and PstA) and a solute-binding protein (PstS).

It localises to the cell inner membrane. The catalysed reaction is phosphate(out) + ATP + H2O = ADP + 2 phosphate(in) + H(+). In terms of biological role, part of the ABC transporter complex PstSACB involved in phosphate import. Responsible for energy coupling to the transport system. This is Phosphate import ATP-binding protein PstB from Aromatoleum aromaticum (strain DSM 19018 / LMG 30748 / EbN1) (Azoarcus sp. (strain EbN1)).